Reading from the N-terminus, the 561-residue chain is PR domain zinc finger protein 14 (561 aa).

The disordered stretch occupies residues M1–Q20. Positions G7–Q20 are enriched in polar residues. Positions G184 to E373 are interaction with CBFA2T2. Positions E241–G356 constitute an SET domain. Y355 is an S-adenosyl-L-methionine binding site. The C2H2-type 1; atypical zinc-finger motif lies at Y390–D416. 5 consecutive C2H2-type zinc fingers follow at residues F422–H445, Y451–H473, Y479–H501, F507–H530, and S536–H558.

The protein belongs to the class V-like SAM-binding methyltransferase superfamily. Interacts with CBFA2T2. Restricted to embryonic stem cells and primordial germ cells. Not detected in epiblast-derived stem cells.

Its subcellular location is the nucleus. Functionally, transcription factor that has both positive and negative roles on transcription. Plays a role in cellular pluripotency. Essential for germ cell development at 2 levels: the reacquisition of potential pluripotency, including SOX2 up-regulation, and successful epigenetic reprogramming, characterized by EHMT1 repression. Its association with CBFA2T2 is required for the functions in pluripotency and germ cell formation. The polypeptide is PR domain zinc finger protein 14 (Prdm14) (Mus musculus (Mouse)).